The chain runs to 110 residues: V-type proton ATPase subunit G1 (110 aa).

N-acetylmethionine is present on Met1. The disordered stretch occupies residues 60-80; the sequence is KLEETSGDSGANVKRLEQETD.

It belongs to the V-ATPase G subunit family. V-ATPase is a heteromultimeric enzyme composed of a peripheral catalytic V1 complex (components A to H) attached to an integral membrane V0 proton pore complex (components: a, c, c'', d and e).

It localises to the cell membrane. The protein localises to the vacuole membrane. Functionally, catalytic subunit of the peripheral V1 complex of vacuolar ATPase (V-ATPase). V-ATPase is responsible for acidifying a variety of intracellular compartments in eukaryotic cells. The sequence is that of V-type proton ATPase subunit G1 (VHA-G1) from Arabidopsis thaliana (Mouse-ear cress).